A 334-amino-acid polypeptide reads, in one-letter code: MTMAANDFPFQCQEKKSYSQPSLVYCNGNIAETYLEEKVLTAPLDYLRALPSKDIRSGLTDAINEFLRVPEEKVLVIKRIIDLLHNASLLIDDIQDSSKLRRGVPVAHHIFGIAQTINSANLAYFIAQRELEKLTNPRAFAIYNEELINLHRGQGMELHWRESLHCPTEDEYLRMIQKKTGGLFRLAIRLLQGESASDDDYVSLIDTLGTLFQIRDDYQNLQSDIYSKNKGYCEDLTEGKFSYPVIHSIRSRPGDVRLINILKQRSEDVMVKQYAVQHIESTGSFAFCQNKIQSLVEQAREQLAALENSSSCGGPVRDILDKLAIKPRANIEVE.

Residues Lys53, Arg56, and His85 each coordinate isopentenyl diphosphate. Mg(2+) contacts are provided by Asp92 and Asp96. Residue Arg101 participates in dimethylallyl diphosphate binding. Arg102 contacts isopentenyl diphosphate. The dimethylallyl diphosphate site is built by Lys179, Thr180, and Gln213. A Mg(2+)-binding site is contributed by Asp216. Positions 220, 230, and 240 each coordinate dimethylallyl diphosphate.

Belongs to the FPP/GGPP synthase family. Requires Mg(2+) as cofactor.

It catalyses the reaction isopentenyl diphosphate + dimethylallyl diphosphate = (2E)-geranyl diphosphate + diphosphate. The enzyme catalyses isopentenyl diphosphate + (2E)-geranyl diphosphate = (2E,6E)-farnesyl diphosphate + diphosphate. It carries out the reaction isopentenyl diphosphate + (2E,6E)-farnesyl diphosphate = (2E,6E,10E)-geranylgeranyl diphosphate + diphosphate. Its pathway is secondary metabolite biosynthesis. In terms of biological role, geranylgeranyl pyrophosphate synthase; part of the gene cluster that mediates the biosynthesis of lolitrems, indole-diterpene mycotoxins that are potent tremorgens in mammals, and are synthesized by clavicipitaceous fungal endophytes in association with their grass hosts. The geranylgeranyl diphosphate (GGPP) synthase ltmG is proposed to catalyze the first step in lolitrem biosynthesis. LtmG catalyzes a series of iterative condensations of isopentenyl diphosphate (IPP) with dimethylallyl diphosphate (DMAPP), geranyl diphosphate (GPP), and farnesyl diphosphate (FPP), to form GGPP. GGPP then condenses with indole-3-glycerol phosphate to form 3-geranylgeranylindole, an acyclic intermediate, to be incorporated into paxilline. Either ltmG or ltmC could be responsible for this step, as both are putative prenyl transferases. The FAD-dependent monooxygenase ltmM then catalyzes the epoxidation of the two terminal alkenes of the geranylgeranyl moiety, which is subsequently cyclized by ltmB, to paspaline. The cytochrome P450 monooxygenases ltmQ and ltmP can sequentially oxidize paspaline to terpendole E and terpendole F. Alternatively, ltmP converts paspaline to an intermediate which is oxidized by ltmQ to terpendole F. LtmF, ltmK, ltmE and ltmJ appear to be unique to the epichloe endophytes. The prenyltransferase ltmF is involved in the 27-hydroxyl-O-prenylation. The cytochrome P450 monooxygenase ltmK is required for the oxidative acetal ring formation. The multi-functional prenyltransferase ltmE is required for C20- and C21-prenylations of the indole ring of paspalanes and acts together with the cytochrome P450 monooxygenase ltmJ to yield lolitremanes by multiple oxidations and ring closures. The stereoisomer pairs of lolitriol and lolitrem N or lolitrem B and lolitrem F may be attributed to variations in the way in which ring closure can occur under the action of ltmJ. While the major product of this pathway is lolitrem B, the prenyl transferases and cytochrome P450 monooxygenases identified in this pathway have a remarkable versatility in their regio- and stereo-specificities to generate a diverse range of metabolites that are products of a metabolic grid rather than a linear pathway. The chain is Geranylgeranyl pyrophosphate synthase ltmG from Epichloe festucae (strain Fl1).